Here is a 340-residue protein sequence, read N- to C-terminus: KRR1 small subunit processome component homolog (340 aa).

Residues 124–192 (DIIKIGNLVH…VRDIVLETMN (69 aa)) form the KH domain. Residues 228-244 (KNKNISKRKQPKSKKPK) show a composition bias toward basic residues. 2 disordered regions span residues 228 to 259 (KNKN…ESKI) and 271 to 324 (NQEQ…KVDV). Residues 269–302 (FLNQEQKQAKRNQERSAKQADAAKKQDERRNKDF) are a coiled coil. Basic and acidic residues-rich tracts occupy residues 275-301 (KQAK…RNKD) and 309-324 (APSR…KVDV).

This sequence belongs to the KRR1 family. As to quaternary structure, monomer. Component of the ribosomal small subunit (SSU) processome.

The protein localises to the nucleus. It localises to the nucleolus. In terms of biological role, required for 40S ribosome biogenesis. Involved in nucleolar processing of pre-18S ribosomal RNA and ribosome assembly. Binds to RNA. Required for female germline development, cell viability during eye development and for survival of dividing cells and epithelial cells during early wing disk development. The protein is KRR1 small subunit processome component homolog of Drosophila persimilis (Fruit fly).